The following is a 250-amino-acid chain: Global transcriptional regulator CodY (250 aa).

The interval 1–146 (MTLLEKTRKL…GATVVGLEIL (146 aa)) is GAF domain. Positions 194 to 213 (ASKIADKVGITRSVIVNALR) form a DNA-binding region, H-T-H motif.

The protein belongs to the CodY family.

Its subcellular location is the cytoplasm. Functionally, DNA-binding global transcriptional regulator which is involved in the adaptive response to starvation and acts by directly or indirectly controlling the expression of numerous genes in response to nutrient availability. During rapid exponential growth, CodY is highly active and represses genes whose products allow adaptation to nutrient depletion. This Caldanaerobacter subterraneus subsp. tengcongensis (strain DSM 15242 / JCM 11007 / NBRC 100824 / MB4) (Thermoanaerobacter tengcongensis) protein is Global transcriptional regulator CodY.